Here is a 160-residue protein sequence, read N- to C-terminus: NADH-quinone oxidoreductase subunit B (160 aa).

4 residues coordinate [4Fe-4S] cluster: cysteine 37, cysteine 38, cysteine 102, and cysteine 132.

This sequence belongs to the complex I 20 kDa subunit family. As to quaternary structure, NDH-1 is composed of 14 different subunits. Subunits NuoB, C, D, E, F, and G constitute the peripheral sector of the complex. [4Fe-4S] cluster serves as cofactor.

The protein localises to the cell inner membrane. The enzyme catalyses a quinone + NADH + 5 H(+)(in) = a quinol + NAD(+) + 4 H(+)(out). Functionally, NDH-1 shuttles electrons from NADH, via FMN and iron-sulfur (Fe-S) centers, to quinones in the respiratory chain. Couples the redox reaction to proton translocation (for every two electrons transferred, four hydrogen ions are translocated across the cytoplasmic membrane), and thus conserves the redox energy in a proton gradient. The protein is NADH-quinone oxidoreductase subunit B of Cupriavidus pinatubonensis (strain JMP 134 / LMG 1197) (Cupriavidus necator (strain JMP 134)).